Reading from the N-terminus, the 499-residue chain is Probable folate-biopterin transporter 2 (499 aa).

12 helical membrane-spanning segments follow: residues Trp-43 to Leu-63, Ile-92 to Phe-112, Pro-116 to Ser-136, Tyr-141 to Ile-161, Leu-185 to Val-205, Gly-209 to Ser-229, Leu-266 to Phe-286, Phe-302 to Leu-322, Leu-330 to Phe-350, Leu-354 to Ile-374, Phe-399 to Ile-419, and Trp-435 to Val-455.

Belongs to the major facilitator superfamily. Folate-biopterin transporter (TC 2.A.71) family.

Its subcellular location is the membrane. Its function is as follows. Could mediate folate transport. The chain is Probable folate-biopterin transporter 2 from Arabidopsis thaliana (Mouse-ear cress).